A 178-amino-acid polypeptide reads, in one-letter code: Ribosomal RNA small subunit methyltransferase G (178 aa).

S-adenosyl-L-methionine contacts are provided by residues Gly54, Leu59, 105 to 106 (LE), and Arg120.

Belongs to the methyltransferase superfamily. RNA methyltransferase RsmG family.

It localises to the cytoplasm. It carries out the reaction guanosine(527) in 16S rRNA + S-adenosyl-L-methionine = N(7)-methylguanosine(527) in 16S rRNA + S-adenosyl-L-homocysteine. Specifically methylates the N7 position of guanine in position 527 of 16S rRNA. This is Ribosomal RNA small subunit methyltransferase G from Helicobacter pylori (strain J99 / ATCC 700824) (Campylobacter pylori J99).